The following is a 472-amino-acid chain: MSASRLISRDPYTGEAIADFAVNDARSIDAACHSARAAFAEWAMTPLAERRAIALRFAETVRARREEIATLIARETGKPMWEALTEADSVAAKVAISIRAQDERAGERSEPMADATARLAHRPHGVLAVIGPFNFPMHLANGHIVPALLAGNAVVFKPSEKTPACGQLMGELWRAAGLPDHVLTIVIGGGEAGEALVRHEALDGVLFTGGVQAGRAIHRALADAPHKILALELGGNAPLVVWDVADIEAAAHLIVQSAYVTAGQRCTCARRLILPEGARGDALLEALTMLMDRLVIGGPFQSPAPFMGPVIDAHAAAQVLAAQDRMTADGGRPLRLAAVREARSALLSPGLIELTDAPLRDEEIFGPLLQVRRAADFDAALALANATRFGLAAGLISDDEALYRRFWTSVRAGIVNWNRPTTGASSAAPFGGVGGSGNHRPSAYYAADYSAYPVAGLESPSPVYRLPIGLNP.

Residue Gly209–Gly214 participates in NAD(+) binding. Residues Glu232 and Cys266 contribute to the active site.

This sequence belongs to the aldehyde dehydrogenase family. AstD subfamily.

It carries out the reaction N-succinyl-L-glutamate 5-semialdehyde + NAD(+) + H2O = N-succinyl-L-glutamate + NADH + 2 H(+). It functions in the pathway amino-acid degradation; L-arginine degradation via AST pathway; L-glutamate and succinate from L-arginine: step 4/5. In terms of biological role, catalyzes the NAD-dependent reduction of succinylglutamate semialdehyde into succinylglutamate. This Caulobacter vibrioides (strain ATCC 19089 / CIP 103742 / CB 15) (Caulobacter crescentus) protein is N-succinylglutamate 5-semialdehyde dehydrogenase 1.